An 84-amino-acid chain; its full sequence is Small ribosomal subunit protein uS17 (84 aa).

The protein belongs to the universal ribosomal protein uS17 family. In terms of assembly, part of the 30S ribosomal subunit.

In terms of biological role, one of the primary rRNA binding proteins, it binds specifically to the 5'-end of 16S ribosomal RNA. This chain is Small ribosomal subunit protein uS17, found in Vibrio atlanticus (strain LGP32) (Vibrio splendidus (strain Mel32)).